The sequence spans 131 residues: Sulfurtransferase TusD (131 aa).

Residue Cys-81 is the Cysteine persulfide intermediate of the active site.

Belongs to the DsrE/TusD family. In terms of assembly, heterohexamer, formed by a dimer of trimers. The hexameric TusBCD complex contains 2 copies each of TusB, TusC and TusD. The TusBCD complex interacts with TusE.

It is found in the cytoplasm. Functionally, part of a sulfur-relay system required for 2-thiolation of 5-methylaminomethyl-2-thiouridine (mnm(5)s(2)U) at tRNA wobble positions. Accepts sulfur from TusA and transfers it in turn to TusE. The polypeptide is Sulfurtransferase TusD (Yersinia pseudotuberculosis serotype O:1b (strain IP 31758)).